Reading from the N-terminus, the 407-residue chain is Accessory Sec system protein translocase subunit SecY2 (407 aa).

10 consecutive transmembrane segments (helical) span residues 13-33 (FLWT…TLPF), 65-85 (FFSI…MFTV), 104-124 (MLLT…NLPL), 133-153 (GTIV…LIWL), 158-178 (SSMG…SYIP), 192-212 (PLIL…AVLV), 248-268 (IMYA…LLFF), 287-307 (IPWF…FAFI), 345-365 (FAFV…LLIF), and 370-390 (YMRL…VFSI).

Belongs to the SecY/SEC61-alpha family. SecY2 subfamily. In terms of assembly, may form heterotrimers with SecE and SecG subunits (Potential). Component of the accessory SecA2/SecY2 protein translocase complex required to export cell wall protein GspB.

It is found in the cell membrane. The central subunit of a protein translocation channel (Potential). Part of the accessory SecA2/SecY2 system specifically required to export GspB, a serine-rich repeat cell wall protein encoded upstream in the same operon. The sequence is that of Accessory Sec system protein translocase subunit SecY2 from Streptococcus gordonii.